The following is a 366-amino-acid chain: Phospho-N-acetylmuramoyl-pentapeptide-transferase (366 aa).

The next 10 membrane-spanning stretches (helical) occupy residues 3–23, 54–74, 80–100, 120–140, 161–181, 197–217, 238–258, 262–282, 288–308, and 341–361; these read QIFI…PVLI, GIAV…VGLV, PGVS…LGFA, LVGQ…FPNA, IAIG…YLVI, LASG…FWQF, LSML…WNAA, IFMG…LSVT, LMIL…IQVV, and FWLL…AEWL.

It belongs to the glycosyltransferase 4 family. MraY subfamily. Mg(2+) serves as cofactor.

The protein localises to the cell membrane. It carries out the reaction UDP-N-acetyl-alpha-D-muramoyl-L-alanyl-gamma-D-glutamyl-meso-2,6-diaminopimeloyl-D-alanyl-D-alanine + di-trans,octa-cis-undecaprenyl phosphate = di-trans,octa-cis-undecaprenyl diphospho-N-acetyl-alpha-D-muramoyl-L-alanyl-D-glutamyl-meso-2,6-diaminopimeloyl-D-alanyl-D-alanine + UMP. It participates in cell wall biogenesis; peptidoglycan biosynthesis. Its function is as follows. Catalyzes the initial step of the lipid cycle reactions in the biosynthesis of the cell wall peptidoglycan: transfers peptidoglycan precursor phospho-MurNAc-pentapeptide from UDP-MurNAc-pentapeptide onto the lipid carrier undecaprenyl phosphate, yielding undecaprenyl-pyrophosphoryl-MurNAc-pentapeptide, known as lipid I. This is Phospho-N-acetylmuramoyl-pentapeptide-transferase from Corynebacterium jeikeium (strain K411).